A 112-amino-acid polypeptide reads, in one-letter code: UPF0342 protein STH1710 (112 aa).

Belongs to the UPF0342 family.

The sequence is that of UPF0342 protein STH1710 from Symbiobacterium thermophilum (strain DSM 24528 / JCM 14929 / IAM 14863 / T).